The following is a 395-amino-acid chain: S-adenosylmethionine synthase (395 aa).

Histidine 16 is an ATP binding site. Aspartate 18 provides a ligand contact to Mg(2+). Glutamate 44 is a binding site for K(+). 2 residues coordinate L-methionine: glutamate 57 and glutamine 100. Residues 100–110 (QSPDIAQGVDR) form a flexible loop region. ATP is bound by residues 167-169 (DAK), 233-234 (RF), aspartate 242, 248-249 (RK), alanine 265, and lysine 269. An L-methionine-binding site is contributed by aspartate 242. Lysine 273 contributes to the L-methionine binding site.

The protein belongs to the AdoMet synthase family. As to quaternary structure, homotetramer; dimer of dimers. It depends on Mg(2+) as a cofactor. K(+) is required as a cofactor.

It localises to the cytoplasm. The catalysed reaction is L-methionine + ATP + H2O = S-adenosyl-L-methionine + phosphate + diphosphate. Its pathway is amino-acid biosynthesis; S-adenosyl-L-methionine biosynthesis; S-adenosyl-L-methionine from L-methionine: step 1/1. Catalyzes the formation of S-adenosylmethionine (AdoMet) from methionine and ATP. The overall synthetic reaction is composed of two sequential steps, AdoMet formation and the subsequent tripolyphosphate hydrolysis which occurs prior to release of AdoMet from the enzyme. This Burkholderia thailandensis (strain ATCC 700388 / DSM 13276 / CCUG 48851 / CIP 106301 / E264) protein is S-adenosylmethionine synthase.